A 646-amino-acid polypeptide reads, in one-letter code: Galactofuranosyltransferase GlfT2 (646 aa).

The UDP-alpha-D-galactofuranose site is built by arginine 182, glutamine 211, asparagine 240, and aspartate 267. Mn(2+)-binding residues include aspartate 267 and aspartate 269. Aspartate 384 acts as the Proton acceptor in catalysis. Histidine 408 is a binding site for Mn(2+).

It belongs to the glycosyltransferase 2 family. As to quaternary structure, homotetramer. It depends on Mn(2+) as a cofactor. Mg(2+) is required as a cofactor.

It localises to the cell membrane. It catalyses the reaction beta-D-galactofuranosyl-(1-&gt;5)-beta-D-galactofuranosyl-(1-&gt;4)-alpha-L-rhamnosyl-(1-&gt;3)-N-acetyl-alpha-D-glucosaminyl-diphospho-trans,octa-cis-decaprenol + 28 UDP-alpha-D-galactofuranose = [beta-D-galactofuranosyl-(1-&gt;5)-beta-D-galactofuranosyl-(1-&gt;6)]14-beta-D-galactofuranosyl-(1-&gt;5)-beta-D-galactofuranosyl-(1-&gt;4)-alpha-L-rhamnopyranosyl-(1-&gt;3)-N-acetyl-alpha-D-glucosaminyl-diphospho-trans,octa-cis-decaprenol + 28 UDP + 28 H(+). It participates in cell wall biogenesis; cell wall polysaccharide biosynthesis. In terms of biological role, involved in the galactan polymerization of the arabinogalactan (AG) region of the mycolylarabinogalactan-peptidoglycan (mAGP) complex, an essential component of the mycobacteria cell wall. Thus, successively transfers approximately 28 galactofuranosyl (Galf) residues from UDP-galactofuranose (UDP-Galf) onto the galactofuranosyl-galactofuranosyl-rhamnosyl-GlcNAc-diphospho-decaprenol (Galf-Galf-Rha-GlcNAc-PP-C50) acceptor produced by GlfT1, with alternating 1-&gt;5 and 1-&gt;6 links, forming a galactan domain with approximately 30 galactofuranosyl residues. This Mycolicibacterium smegmatis (strain ATCC 700084 / mc(2)155) (Mycobacterium smegmatis) protein is Galactofuranosyltransferase GlfT2.